The following is a 730-amino-acid chain: Catalase-peroxidase (730 aa).

The disordered stretch occupies residues 1 to 25 (MEEKKCPVTGHTQHTPTGGGTKNKD). The segment at residues 95–218 (WHSAGTYRLN…LAAVQMGLIY (124 aa)) is a cross-link (tryptophyl-tyrosyl-methioninium (Trp-Tyr) (with M-244)). His96 (proton acceptor) is an active-site residue. Residues 218-244 (YVNPEGPNGQPSVLASGRDVRDTFKRM) constitute a cross-link (tryptophyl-tyrosyl-methioninium (Tyr-Met) (with W-95)). Position 259 (His259) interacts with heme b.

This sequence belongs to the peroxidase family. Peroxidase/catalase subfamily. In terms of assembly, homodimer or homotetramer. Heme b is required as a cofactor. Formation of the three residue Trp-Tyr-Met cross-link is important for the catalase, but not the peroxidase activity of the enzyme.

It catalyses the reaction H2O2 + AH2 = A + 2 H2O. The catalysed reaction is 2 H2O2 = O2 + 2 H2O. Functionally, bifunctional enzyme with both catalase and broad-spectrum peroxidase activity. The chain is Catalase-peroxidase from Desulfitobacterium hafniense (strain Y51).